The sequence spans 166 residues: Transcription factor HES-5 (166 aa).

One can recognise a bHLH domain in the interval Lys16 to Ser72. The region spanning Tyr88–Phe119 is the Orange domain. Positions Ala125 to Leu144 are disordered. Residues Trp163–Trp166 carry the WRPW motif motif.

In terms of assembly, transcription repression requires formation of a complex with a corepressor protein of the Groucho/TLE family. As to expression, expressed in fetal heart and brain tumors.

The protein localises to the nucleus. Transcriptional repressor of genes that require a bHLH protein for their transcription. Plays an important role as neurogenesis negative regulator. This is Transcription factor HES-5 (HES5) from Homo sapiens (Human).